A 185-amino-acid chain; its full sequence is Peptidyl-tRNA hydrolase (185 aa).

Tyrosine 14 is a tRNA binding site. Histidine 19 functions as the Proton acceptor in the catalytic mechanism. Positions 64, 66, and 112 each coordinate tRNA.

Belongs to the PTH family. As to quaternary structure, monomer.

The protein resides in the cytoplasm. It catalyses the reaction an N-acyl-L-alpha-aminoacyl-tRNA + H2O = an N-acyl-L-amino acid + a tRNA + H(+). Hydrolyzes ribosome-free peptidyl-tRNAs (with 1 or more amino acids incorporated), which drop off the ribosome during protein synthesis, or as a result of ribosome stalling. Its function is as follows. Catalyzes the release of premature peptidyl moieties from peptidyl-tRNA molecules trapped in stalled 50S ribosomal subunits, and thus maintains levels of free tRNAs and 50S ribosomes. The sequence is that of Peptidyl-tRNA hydrolase from Halalkalibacterium halodurans (strain ATCC BAA-125 / DSM 18197 / FERM 7344 / JCM 9153 / C-125) (Bacillus halodurans).